A 118-amino-acid polypeptide reads, in one-letter code: Putative membrane protein insertion efficiency factor (118 aa).

A disordered region spans residues 76-118; that stretch reads WDPVPQRRPRRRDAAAADAAMSAPHACKGSPHAVVGDTNDGST. Low complexity predominate over residues 91–101; it reads AADAAMSAPHA.

The protein belongs to the UPF0161 family.

The protein resides in the cell membrane. Could be involved in insertion of integral membrane proteins into the membrane. The chain is Putative membrane protein insertion efficiency factor from Nocardia farcinica (strain IFM 10152).